The chain runs to 237 residues: MGCCGCSGGCGSGCGGRGSGCGGCGSGCGGCGSGCGGCGSGCGGCGGCGSGCAGCGGCGSGCCVPVCCCKPMCCCVPACSCSSCGKGGCGSCGGSKRGCVSCGVSKGACGSCGGSKGGCGSCGGSKGGCGSCGGSKGGCGSCGGSKGGCGSYGCSQSSCCKPCCCSSGCGSSCCQSSCCKPYCCQSSCCKPYCCQSSCCKPCSCFSGCGSSCCQSSCYKPCCCQSSCCVPVCCQCKI.

Tandem repeats lie at residues 62 to 65 (CCVP), 68 to 71 (CCKP), 74 to 77 (CCVP), 159 to 162 (CCKP), 178 to 181 (CCKP), 188 to 191 (CCKP), 198 to 201 (CCKP), and 227 to 230 (CCVP). The tract at residues 62–230 (CCVPVCCCKP…CCCQSSCCVP (169 aa)) is 8 X 4 AA repeats of C-C-X-P.

It belongs to the KRTAP type 5 family. As to quaternary structure, interacts with hair keratins. Restricted to hair root, not detected in any other tissues.

In terms of biological role, in the hair cortex, hair keratin intermediate filaments are embedded in an interfilamentous matrix, consisting of hair keratin-associated protein (KRTAP), which are essential for the formation of a rigid and resistant hair shaft through their extensive disulfide bond cross-linking with abundant cysteine residues of hair keratins. The matrix proteins include the high-sulfur and high-glycine-tyrosine keratins. The chain is Keratin-associated protein 5-5 (KRTAP5-5) from Homo sapiens (Human).